The primary structure comprises 548 residues: Membrane protein insertase YidC (548 aa).

A helical membrane pass occupies residues 6 to 26; sequence NLLVIALLFVSFMIWQAWEQD. A disordered region spans residues 28 to 55; that stretch reads NPQPQAQQTTQTTTTAAGSAADQGVPAS. Residues 30–50 show a composition bias toward low complexity; that stretch reads QPQAQQTTQTTTTAAGSAADQ. 4 helical membrane-spanning segments follow: residues 350-370, 420-440, 458-478, and 499-519; these read FVGNWGFSIIIITFIVRGIMY, LGGCFPLLIQMPIFLALYYML, LSAQDPYYILPILMGVTMFFI, and PVIFTVFFLWFPSGLVLYYIV.

This sequence belongs to the OXA1/ALB3/YidC family. Type 1 subfamily. Interacts with the Sec translocase complex via SecD. Specifically interacts with transmembrane segments of nascent integral membrane proteins during membrane integration.

Its subcellular location is the cell inner membrane. Functionally, required for the insertion and/or proper folding and/or complex formation of integral membrane proteins into the membrane. Involved in integration of membrane proteins that insert both dependently and independently of the Sec translocase complex, as well as at least some lipoproteins. Aids folding of multispanning membrane proteins. This Escherichia coli (strain K12 / MC4100 / BW2952) protein is Membrane protein insertase YidC.